The primary structure comprises 990 residues: Activator of stress genes protein 1 (990 aa).

The disordered stretch occupies residues 1–88 (MPKREIEDTQ…NKPKSQENKR (88 aa)). The span at 9–23 (TQSPYSSTGLVSTGE) shows a compositional bias: polar residues. Low complexity predominate over residues 24 to 61 (SPKTSTSTPTSSTNNRAATTTTNNTSTTSTSLLKSNSN). A DNA-binding region (zn(2)-C6 fungal-type) is located at residues 95–121 (CDTCRQKKVKCDGKQPCIHCTVYSYKC). Composition is skewed to low complexity over residues 160–179 (NNNSSNQQSLQSLQQQQQHV), 282–293 (SFDDSSNSAVSS), and 773–793 (TATTNSTTTTANTNSNSNSNS). Disordered regions lie at residues 160–192 (NNNSSNQQSLQSLQQQQQHVVHQHQHQPLPADE), 255–295 (QDPD…SSPR), 764–800 (RTASRSRQVTATTNSTTTTANTNSNSNSNSQPTTLPA), and 915–944 (SNNNNSNNVNNNFNNNNNAGEVNNNSNGVA).

This sequence belongs to the ASG1 family.

The protein localises to the nucleus. Functionally, transcription factor necessary to sustain growth on non-fermentative carbon sources such as sodium acetate, acetic acid, or ethanol. Plays a role in hyphal formation. The protein is Activator of stress genes protein 1 (ASG1) of Candida albicans (strain SC5314 / ATCC MYA-2876) (Yeast).